The chain runs to 356 residues: Guanine nucleotide-binding protein alpha-3 subunit (356 aa).

The tract at residues 1 to 26 (MGACMSKNDEETEQKKRSQKIDRDLE) is disordered. Glycine 2 carries N-myristoyl glycine lipidation. Cysteine 4 carries the S-palmitoyl cysteine lipid modification. A compositionally biased stretch (basic and acidic residues) spans 7-23 (KNDEETEQKKRSQKIDR). The G-alpha domain maps to 34 to 356 (KECKILLLGS…NNALKDSGIL (323 aa)). The interval 37 to 50 (KILLLGSGESGKST) is G1 motif. GTP is bound by residues 42–49 (GSGESGKS), 179–185 (LRARTKT), 204–208 (DVGGQ), 273–276 (NKVD), and alanine 328. Mg(2+)-binding residues include serine 49 and threonine 185. The tract at residues 177–185 (DVLRARTKT) is G2 motif. Positions 200–209 (IHMFDVGGQR) are G3 motif. The interval 269–276 (ILFLNKVD) is G4 motif. Residues 326-331 (TQATDT) form a G5 motif region.

The protein belongs to the G-alpha family. G(q) subfamily. G proteins are composed of 3 units; alpha, beta and gamma. The alpha chain contains the guanine nucleotide binding site.

Its function is as follows. Guanine nucleotide-binding proteins (G proteins) are involved as modulators or transducers in various transmembrane signaling systems. Involved in conidiation. This chain is Guanine nucleotide-binding protein alpha-3 subunit (gna-3), found in Neurospora crassa (strain ATCC 24698 / 74-OR23-1A / CBS 708.71 / DSM 1257 / FGSC 987).